A 607-amino-acid chain; its full sequence is Isocitrate dehydrogenase kinase/phosphatase (607 aa).

Residues 328 to 334 and lysine 349 each bind ATP; that span reads APGIKGL. Aspartate 384 is a catalytic residue.

The protein belongs to the AceK family.

The protein localises to the cytoplasm. The enzyme catalyses L-seryl-[isocitrate dehydrogenase] + ATP = O-phospho-L-seryl-[isocitrate dehydrogenase] + ADP + H(+). Bifunctional enzyme which can phosphorylate or dephosphorylate isocitrate dehydrogenase (IDH) on a specific serine residue. This is a regulatory mechanism which enables bacteria to bypass the Krebs cycle via the glyoxylate shunt in response to the source of carbon. When bacteria are grown on glucose, IDH is fully active and unphosphorylated, but when grown on acetate or ethanol, the activity of IDH declines drastically concomitant with its phosphorylation. This chain is Isocitrate dehydrogenase kinase/phosphatase, found in Cupriavidus metallidurans (strain ATCC 43123 / DSM 2839 / NBRC 102507 / CH34) (Ralstonia metallidurans).